The following is a 274-amino-acid chain: Glutamate--cysteine ligase regulatory subunit (274 aa).

At Lys-263 the chain carries N6-acetyllysine.

Belongs to the aldo/keto reductase family. Glutamate--cysteine ligase light chain subfamily. Heterodimer of a catalytic heavy chain and a regulatory light chain. As to expression, in all tissues examined. Highest levels in skeletal muscle.

The protein operates within sulfur metabolism; glutathione biosynthesis; glutathione from L-cysteine and L-glutamate: step 1/2. This chain is Glutamate--cysteine ligase regulatory subunit (GCLM), found in Homo sapiens (Human).